The primary structure comprises 148 residues: Probable TtuB-protein conjugate cleaving protease (148 aa).

One can recognise an MPN domain in the interval 22–148 (HGLVLYVPRG…EGQEVALVVL (127 aa)). The active-site Proton donor/acceptor is the E47. Residues H101, H103, and D114 each contribute to the Zn(2+) site. The short motif at 101–114 (HSHPKGPALPSPRD) is the JAMM motif element.

The protein belongs to the peptidase M67B family. Requires Zn(2+) as cofactor.

Functionally, probable metalloprotease that cleaves the ubiquitin-like modifier protein TtuB from protein conjugates, hydrolyzing the isopeptide bond between a lysine residue of the target protein and the C-terminal glycine of the modifier protein. Does not seem to work for all the TtuB conjugates. This chain is Probable TtuB-protein conjugate cleaving protease, found in Thermus thermophilus (strain ATCC BAA-163 / DSM 7039 / HB27).